The following is a 705-amino-acid chain: Tetratricopeptide repeat protein 12 (705 aa).

Thr-71 is modified (phosphothreonine). TPR repeat units follow at residues 106–139, 140–173, and 174–207; these read ADALKEKGNEAFAEGNYETAILRYSEGLEKLKDM, KVLYTNRAQAYMKLEDYEKALVDCEWALKCDEKC, and TKAYFHMGKANLALKNYSVSRECYKKILEINPKL.

In terms of tissue distribution, expressed in testis and in epithelial cells of trachea and bronchial tube.

The protein resides in the cytoplasm. Cytoplasmic protein that plays a role in the proper assembly of dynein arm complexes in motile cilia in both respiratory cells and sperm flagella. This is Tetratricopeptide repeat protein 12 (TTC12) from Homo sapiens (Human).